The sequence spans 314 residues: Olfactory receptor 1C1 (314 aa).

Residues 1–25 (MEKRNLTVVREFVLLGLPSSAEQQH) are Extracellular-facing. The helical transmembrane segment at 26 to 49 (LLSVLFLCMYLATTLGNMLIIATI) threads the bilayer. The Cytoplasmic portion of the chain corresponds to 50 to 57 (GFDSHLHS). Residues 58 to 79 (PMYFFLSNLAFVDICFTSTTVP) traverse the membrane as a helical segment. At 80–100 (QMVVNILTGTKTISFAGCLTQ) the chain is on the extracellular side. Cys97 and Cys189 are oxidised to a cystine. A helical transmembrane segment spans residues 101–120 (LFFFVSFVNMDSLLLCVMAY). Residues 121–139 (DRYVAICHPLHYTARMNLC) are Cytoplasmic-facing. The chain crosses the membrane as a helical span at residues 140-158 (LCVQLVAGLWLVTYLHALL). Topologically, residues 159–195 (HTVLIAQLSFCASNIIHHFFCDLNPLLQLSCSDVSFN) are extracellular. Residues 196–219 (VMIIFAVGGLLALTPLVCILVSYG) traverse the membrane as a helical segment. The Cytoplasmic portion of the chain corresponds to 220-236 (LIFSTVLKITSTQGKQR). The helical transmembrane segment at 237 to 259 (AVSTCSCHLSVVVLFYGTAIAVY) threads the bilayer. Residues 260–272 (FSPSSPHMPESDT) are Extracellular-facing. The chain crosses the membrane as a helical span at residues 273–292 (LSTIMYSMVAPMLNPFIYTL). At 293 to 314 (RNRDMKRGLQKMLLKCTVFQQQ) the chain is on the cytoplasmic side.

This sequence belongs to the G-protein coupled receptor 1 family.

Its subcellular location is the cell membrane. In terms of biological role, odorant receptor. In Homo sapiens (Human), this protein is Olfactory receptor 1C1 (OR1C1).